Here is a 353-residue protein sequence, read N- to C-terminus: Outer membrane protein P5 (353 aa).

Positions 1–21 (MKKTAIALVVAGLAAASVAQA) are cleaved as a signal peptide. Beta stranded transmembrane passes span 27-37 (TFYAGVKAGQA), 58-69 (SFTYGVFGGYQI), 77-85 (LAVELGYDD), 104-115 (HGTHLSLKGSYE), 120-128 (LDVYGKAGV), 158-167 (GLFAVGAEYA), 172-179 (LAVRLEYQ), and 205-213 (SINAGISYR). The OmpA-like domain occupies 227 to 353 (VVSKTFSLNS…RVEIAVNGTK (127 aa)). Cys-326 and Cys-338 are joined by a disulfide.

Belongs to the outer membrane OOP (TC 1.B.6) superfamily. OmpA family. In terms of assembly, monomer and homodimer.

It localises to the cell outer membrane. With TolR probably plays a role in maintaining the position of the peptidoglycan cell wall in the periplasm. Acts as a porin with low permeability that allows slow penetration of small solutes; an internal gate slows down solute passage. Functionally, reconstitution in planar bilayers with lithium dodecyl sulfate-solublized P5 yields narrow pores (58 pS conductance) with a low probability of opening, whereas n-octyl-bD-glucopyranoside-solubilized P5 forms large pores (1.1 nS conductance) with high open probability. The large pore easily converts to the smaller pore at room temperature; at 42 degrees Celsius the smaller pore converts to the larger one. The polypeptide is Outer membrane protein P5 (Haemophilus influenzae (strain ATCC 51907 / DSM 11121 / KW20 / Rd)).